Consider the following 380-residue polypeptide: Probable protein phosphatase 2C 2 (380 aa).

In terms of domain architecture, PPM-type phosphatase spans 69–339; that stretch reads RSGSFADIGP…DNLTVIVICF (271 aa). Mn(2+) contacts are provided by aspartate 113, glycine 114, aspartate 287, and aspartate 330.

It belongs to the PP2C family. Mg(2+) is required as a cofactor. Mn(2+) serves as cofactor.

The catalysed reaction is O-phospho-L-seryl-[protein] + H2O = L-seryl-[protein] + phosphate. It carries out the reaction O-phospho-L-threonyl-[protein] + H2O = L-threonyl-[protein] + phosphate. The polypeptide is Probable protein phosphatase 2C 2 (Oryza sativa subsp. japonica (Rice)).